The primary structure comprises 483 residues: Probable L-xylulose kinase (483 aa).

This sequence belongs to the FGGY kinase family. In terms of assembly, homodimer.

The catalysed reaction is L-xylulose + ATP = L-xylulose 5-phosphate + ADP + H(+). This chain is Probable L-xylulose kinase (lyx), found in Pasteurella multocida (strain Pm70).